The chain runs to 65 residues: Large ribosomal subunit protein bL35 (65 aa).

It belongs to the bacterial ribosomal protein bL35 family.

The sequence is that of Large ribosomal subunit protein bL35 from Photorhabdus laumondii subsp. laumondii (strain DSM 15139 / CIP 105565 / TT01) (Photorhabdus luminescens subsp. laumondii).